The chain runs to 687 residues: Protein 4.2 (687 aa).

Gly-2 carries N-myristoyl glycine lipidation. The tract at residues 31–39 (LFVRRGQPF) is band 3 binding. A Phosphoserine modification is found at Ser-247.

This sequence belongs to the transglutaminase superfamily. Transglutaminase family. As to quaternary structure, component of the ankyrin-1 complex in the erythrocyte, composed of ANK1, RHCE, RHAG, SLC4A1, EPB42, GYPA, GYPB and AQP1. Interacts with SLC4A1 (via the cytoplasmic domain); this interaction is mediated by the SLC4A1 Band 3-I dimer. Interacts with ANK1 (via ANK 1-13 repeats). Interacts with AQP1 (via the C-terminal).

The protein localises to the cell membrane. It is found in the cytoplasm. Its subcellular location is the cytoskeleton. Its function is as follows. Component of the ankyrin-1 complex, a multiprotein complex involved in the stability and shape of the erythrocyte membrane. This is Protein 4.2 from Bos taurus (Bovine).